Consider the following 353-residue polypeptide: Peptide-N(4)-(N-acetyl-beta-glucosaminyl)asparagine amidase (353 aa).

Residues C125, C128, and C159 each coordinate Zn(2+). The active-site Nucleophile is C185. Catalysis depends on residues H212 and D229. E232 is a binding site for substrate. Residues 316-353 (SLEKTKPSKDTSTTTLTGTKGRESGSTAWKQQRGEDGS) are disordered. Residues 325-334 (DTSTTTLTGT) show a composition bias toward low complexity.

Belongs to the transglutaminase-like superfamily. PNGase family. It depends on Zn(2+) as a cofactor.

It localises to the cytoplasm. It catalyses the reaction Hydrolysis of an N(4)-(acetyl-beta-D-glucosaminyl)asparagine residue in which the glucosamine residue may be further glycosylated, to yield a (substituted) N-acetyl-beta-D-glucosaminylamine and a peptide containing an aspartate residue.. Functionally, specifically deglycosylates the denatured form of N-linked glycoproteins in the cytoplasm and assists their proteasome-mediated degradation. Cleaves the beta-aspartyl-glucosamine (GlcNAc) of the glycan and the amide side chain of Asn, converting Asn to Asp. Prefers proteins containing high-mannose over those bearing complex type oligosaccharides. Can recognize misfolded proteins in the endoplasmic reticulum that are exported to the cytosol to be destroyed and deglycosylate them, while it has no activity toward native proteins. Deglycosylation is a prerequisite for subsequent proteasome-mediated degradation of some, but not all, misfolded glycoproteins. The chain is Peptide-N(4)-(N-acetyl-beta-glucosaminyl)asparagine amidase (PNG1) from Kluyveromyces lactis (strain ATCC 8585 / CBS 2359 / DSM 70799 / NBRC 1267 / NRRL Y-1140 / WM37) (Yeast).